Consider the following 385-residue polypeptide: Acetylornithine aminotransferase (385 aa).

Pyridoxal 5'-phosphate contacts are provided by residues 94–95 (GT) and Phe-126. Arg-129 is a N(2)-acetyl-L-ornithine binding site. 211–214 (DEVQ) provides a ligand contact to pyridoxal 5'-phosphate. Lys-240 bears the N6-(pyridoxal phosphate)lysine mark. Residue Thr-267 participates in N(2)-acetyl-L-ornithine binding. Thr-268 contributes to the pyridoxal 5'-phosphate binding site.

Belongs to the class-III pyridoxal-phosphate-dependent aminotransferase family. ArgD subfamily. In terms of assembly, homodimer. Requires pyridoxal 5'-phosphate as cofactor.

Its subcellular location is the cytoplasm. The catalysed reaction is N(2)-acetyl-L-ornithine + 2-oxoglutarate = N-acetyl-L-glutamate 5-semialdehyde + L-glutamate. Its pathway is amino-acid biosynthesis; L-arginine biosynthesis; N(2)-acetyl-L-ornithine from L-glutamate: step 4/4. In Thermotoga maritima (strain ATCC 43589 / DSM 3109 / JCM 10099 / NBRC 100826 / MSB8), this protein is Acetylornithine aminotransferase.